The primary structure comprises 210 residues: Probable GTP-binding protein EngB (210 aa).

One can recognise an EngB-type G domain in the interval 25–199 (TGIEVAFAGR…RQKLDTWFNE (175 aa)). GTP-binding positions include 33–40 (GRSNAGKS), 60–64 (GRTQL), 78–81 (DLPG), 145–148 (TKAD), and 178–180 (FSS). Residues S40 and T62 each contribute to the Mg(2+) site.

This sequence belongs to the TRAFAC class TrmE-Era-EngA-EngB-Septin-like GTPase superfamily. EngB GTPase family. Mg(2+) serves as cofactor.

Necessary for normal cell division and for the maintenance of normal septation. The polypeptide is Probable GTP-binding protein EngB (Escherichia coli O157:H7).